The primary structure comprises 404 residues: Rhomboid-related protein 3 (404 aa).

2 EF-hand domains span residues 34 to 69 (APED…HSSK) and 70 to 105 (LDPH…KRSN). Helical transmembrane passes span 164 to 184 (WFMI…GVLL), 227 to 247 (LGLN…VHGA), 250 to 270 (IGLV…VADM), 274 to 294 (VVGS…NIVM), 305 to 324 (LLRM…RAVW), 338 to 358 (PSFV…VVVL), and 371 to 391 (WWIF…WNIF). The Nucleophile role is filled by serine 278. Histidine 343 is a catalytic residue.

Belongs to the peptidase S54 family.

Its subcellular location is the membrane. It carries out the reaction Cleaves type-1 transmembrane domains using a catalytic dyad composed of serine and histidine that are contributed by different transmembrane domains.. Its function is as follows. May be involved in regulated intramembrane proteolysis and the subsequent release of functional polypeptides from their membrane anchors. In Mus musculus (Mouse), this protein is Rhomboid-related protein 3 (Rhbdl3).